We begin with the raw amino-acid sequence, 547 residues long: Glucose-6-phosphate isomerase (547 aa).

The active-site Proton donor is E352. Residues H383 and K511 contribute to the active site.

It belongs to the GPI family.

The protein localises to the cytoplasm. The enzyme catalyses alpha-D-glucose 6-phosphate = beta-D-fructose 6-phosphate. It functions in the pathway carbohydrate biosynthesis; gluconeogenesis. Its pathway is carbohydrate degradation; glycolysis; D-glyceraldehyde 3-phosphate and glycerone phosphate from D-glucose: step 2/4. Functionally, catalyzes the reversible isomerization of glucose-6-phosphate to fructose-6-phosphate. The polypeptide is Glucose-6-phosphate isomerase (Rhodospirillum rubrum (strain ATCC 11170 / ATH 1.1.1 / DSM 467 / LMG 4362 / NCIMB 8255 / S1)).